The following is a 366-amino-acid chain: Chorismate synthase (366 aa).

R48 is a binding site for NADP(+). FMN is bound by residues 125-127, 238-239, G278, 293-297, and R319; these read RSS, NA, and KPTSS.

Belongs to the chorismate synthase family. Homotetramer. FMNH2 serves as cofactor.

The catalysed reaction is 5-O-(1-carboxyvinyl)-3-phosphoshikimate = chorismate + phosphate. It functions in the pathway metabolic intermediate biosynthesis; chorismate biosynthesis; chorismate from D-erythrose 4-phosphate and phosphoenolpyruvate: step 7/7. In terms of biological role, catalyzes the anti-1,4-elimination of the C-3 phosphate and the C-6 proR hydrogen from 5-enolpyruvylshikimate-3-phosphate (EPSP) to yield chorismate, which is the branch point compound that serves as the starting substrate for the three terminal pathways of aromatic amino acid biosynthesis. This reaction introduces a second double bond into the aromatic ring system. In Alkalilimnicola ehrlichii (strain ATCC BAA-1101 / DSM 17681 / MLHE-1), this protein is Chorismate synthase.